Reading from the N-terminus, the 558-residue chain is Dihydroxy-acid dehydratase (558 aa).

Asp-81 provides a ligand contact to Mg(2+). Residue Cys-122 coordinates [2Fe-2S] cluster. The Mg(2+) site is built by Asp-123 and Lys-124. An N6-carboxylysine modification is found at Lys-124. A [2Fe-2S] cluster-binding site is contributed by Cys-195. Glu-447 lines the Mg(2+) pocket. Ser-473 serves as the catalytic Proton acceptor.

It belongs to the IlvD/Edd family. Homodimer. [2Fe-2S] cluster is required as a cofactor. Requires Mg(2+) as cofactor.

The catalysed reaction is (2R)-2,3-dihydroxy-3-methylbutanoate = 3-methyl-2-oxobutanoate + H2O. It catalyses the reaction (2R,3R)-2,3-dihydroxy-3-methylpentanoate = (S)-3-methyl-2-oxopentanoate + H2O. Its pathway is amino-acid biosynthesis; L-isoleucine biosynthesis; L-isoleucine from 2-oxobutanoate: step 3/4. It participates in amino-acid biosynthesis; L-valine biosynthesis; L-valine from pyruvate: step 3/4. In terms of biological role, functions in the biosynthesis of branched-chain amino acids. Catalyzes the dehydration of (2R,3R)-2,3-dihydroxy-3-methylpentanoate (2,3-dihydroxy-3-methylvalerate) into 2-oxo-3-methylpentanoate (2-oxo-3-methylvalerate) and of (2R)-2,3-dihydroxy-3-methylbutanoate (2,3-dihydroxyisovalerate) into 2-oxo-3-methylbutanoate (2-oxoisovalerate), the penultimate precursor to L-isoleucine and L-valine, respectively. In Bacillus subtilis (strain 168), this protein is Dihydroxy-acid dehydratase.